Consider the following 333-residue polypeptide: Phosphate acyltransferase (333 aa).

The protein belongs to the PlsX family. In terms of assembly, homodimer. Probably interacts with PlsY.

The protein resides in the cytoplasm. The catalysed reaction is a fatty acyl-[ACP] + phosphate = an acyl phosphate + holo-[ACP]. It functions in the pathway lipid metabolism; phospholipid metabolism. Its function is as follows. Catalyzes the reversible formation of acyl-phosphate (acyl-PO(4)) from acyl-[acyl-carrier-protein] (acyl-ACP). This enzyme utilizes acyl-ACP as fatty acyl donor, but not acyl-CoA. In Lactobacillus johnsonii (strain CNCM I-12250 / La1 / NCC 533), this protein is Phosphate acyltransferase.